We begin with the raw amino-acid sequence, 64 residues long: SPbeta prophage-derived uncharacterized protein YosJ (64 aa).

This chain is SPbeta prophage-derived uncharacterized protein YosJ (yosJ), found in Bacillus subtilis (strain 168).